Consider the following 425-residue polypeptide: Adenosine 3'-phospho 5'-phosphosulfate transporter 1 (425 aa).

A run of 9 helical transmembrane segments spans residues 27–47, 102–122, 147–167, 232–252, 263–283, 303–323, 342–360, 365–387, and 391–411; these read FLIL…IYYV, VIIL…AMGV, TQFL…MILA, YSWF…LFLL, ITYT…FDAF, MMFG…IEQG, VFLL…YSTI, PIVF…TIMY, and LTFL…VDIH.

The protein belongs to the nucleotide-sugar transporter family. SLC35B subfamily.

The protein localises to the golgi apparatus membrane. Its function is as follows. Mediates the transport of adenosine 3'-phospho 5'-phosphosulfate (PAPS), from cytosol into Golgi. PAPS is a universal sulfuryl donor for sulfation events that take place in the Golgi. The polypeptide is Adenosine 3'-phospho 5'-phosphosulfate transporter 1 (pst-1) (Caenorhabditis elegans).